The sequence spans 470 residues: tRNA modification GTPase MnmE (470 aa).

3 residues coordinate (6S)-5-formyl-5,6,7,8-tetrahydrofolate: arginine 24, glutamate 81, and lysine 122. The TrmE-type G domain occupies 218 to 383; sequence GIKIVIAGKP…LQEYLSNNIK (166 aa). Asparagine 228 contributes to the K(+) binding site. Residues 228–233, 247–253, and 272–275 contribute to the GTP site; these read NAGKSS, STISGTT, and DTAG. Serine 232 is a Mg(2+) binding site. K(+) is bound by residues serine 247, isoleucine 249, and threonine 252. A Mg(2+)-binding site is contributed by threonine 253. Position 470 (lysine 470) interacts with (6S)-5-formyl-5,6,7,8-tetrahydrofolate.

Belongs to the TRAFAC class TrmE-Era-EngA-EngB-Septin-like GTPase superfamily. TrmE GTPase family. In terms of assembly, homodimer. Heterotetramer of two MnmE and two MnmG subunits. The cofactor is K(+).

Its subcellular location is the cytoplasm. Its function is as follows. Exhibits a very high intrinsic GTPase hydrolysis rate. Involved in the addition of a carboxymethylaminomethyl (cmnm) group at the wobble position (U34) of certain tRNAs, forming tRNA-cmnm(5)s(2)U34. In Blochmanniella pennsylvanica (strain BPEN), this protein is tRNA modification GTPase MnmE.